The following is a 517-amino-acid chain: Nicotine N-demethylase CYP82E4 (517 aa).

Residues 2-22 form a helical membrane-spanning segment; the sequence is VFPIEAIVGLVTFTFLFFFLW. Lysine 254 is covalently cross-linked (Glycyl lysine isopeptide (Lys-Gly) (interchain with G-Cter in ubiquitin)). Residue cysteine 457 coordinates heme.

Belongs to the cytochrome P450 family. CYP82E2 subfamily. Requires heme as cofactor. Expressed at low levels in green leaves.

It localises to the membrane. The enzyme catalyses (S)-nicotine + reduced [NADPH--hemoprotein reductase] + O2 = (S)-nornicotine + formaldehyde + oxidized [NADPH--hemoprotein reductase] + H2O + H(+). The protein operates within alkaloid biosynthesis; nicotine biosynthesis. Involved in the biosynthesis of pyridine alkaloid natural products, leading mainly to the production of anabasine, anatabine, nicotine and nornicotine, effective deterrents against herbivores with antiparasitic and pesticide properties (neurotoxins); nornicotine serves as the precursor in the synthesis of the carcinogen compound N'-nitrosonornicotine (NNN). Catalyzes the demethylation of nicotine to form nornicotine. This Nicotiana tabacum (Common tobacco) protein is Nicotine N-demethylase CYP82E4.